Reading from the N-terminus, the 499-residue chain is Probable cytosol aminopeptidase (499 aa).

Mn(2+)-binding residues include Lys264 and Asp269. The active site involves Lys276. Mn(2+)-binding residues include Asp287, Asp346, and Glu348. The active site involves Arg350.

It belongs to the peptidase M17 family. Mn(2+) is required as a cofactor.

It is found in the cytoplasm. The enzyme catalyses Release of an N-terminal amino acid, Xaa-|-Yaa-, in which Xaa is preferably Leu, but may be other amino acids including Pro although not Arg or Lys, and Yaa may be Pro. Amino acid amides and methyl esters are also readily hydrolyzed, but rates on arylamides are exceedingly low.. It carries out the reaction Release of an N-terminal amino acid, preferentially leucine, but not glutamic or aspartic acids.. In terms of biological role, presumably involved in the processing and regular turnover of intracellular proteins. Catalyzes the removal of unsubstituted N-terminal amino acids from various peptides. The protein is Probable cytosol aminopeptidase of Rhodopseudomonas palustris (strain BisB18).